The chain runs to 194 residues: CDRRFSRSDELTRHIRIHTGQKPFQCRICMRNFSRSDHLTTHIRTHTGEKPFACDICGRKFARSDERKRHTKIHLRQKDKKVEKAASVSATSSSVAAYSSSVATSYSSSIATTYPSSVRTVYSSPASSSYPSPAHTTFPSPSIATTYSSGTATFQTQVATSFPSPGVTNNFSSQVTSALSDMTSTFSPRTIEIC.

3 C2H2-type zinc fingers span residues 1 to 18, 24 to 46, and 52 to 74; these read CDRR…IRIH, FQCR…IRTH, and FACD…TKIH.

It belongs to the EGR C2H2-type zinc-finger protein family.

Its subcellular location is the nucleus. The protein localises to the cytoplasm. Transcriptional regulator. Recognizes and binds to the DNA sequence 5'-GCG(T/G)GGGCG-3'(EGR-site) in the promoter region of target genes. Binds double-stranded target DNA, irrespective of the cytosine methylation status. Regulates the transcription of numerous target genes, and thereby plays an important role in regulating the response to growth factors, DNA damage, and ischemia. Plays a role in the regulation of cell survival, proliferation and cell death. Mediates responses to ischemia and hypoxia; regulates the expression of proteins that are involved in inflammatory processes. Plays a role in regulating the expression of circadian clock genes. This chain is Early growth response protein 1 (EGR1), found in Gallus gallus (Chicken).